The chain runs to 89 residues: Small ribosomal subunit protein uS15 (89 aa).

Residues 1–23 are disordered; that stretch reads MSLGTEEKQNLINTHQVHPTDTG. Residues 10-23 are compositionally biased toward polar residues; the sequence is NLINTHQVHPTDTG.

The protein belongs to the universal ribosomal protein uS15 family. As to quaternary structure, part of the 30S ribosomal subunit. Forms a bridge to the 50S subunit in the 70S ribosome, contacting the 23S rRNA.

Functionally, one of the primary rRNA binding proteins, it binds directly to 16S rRNA where it helps nucleate assembly of the platform of the 30S subunit by binding and bridging several RNA helices of the 16S rRNA. Its function is as follows. Forms an intersubunit bridge (bridge B4) with the 23S rRNA of the 50S subunit in the ribosome. This Prochlorococcus marinus (strain NATL2A) protein is Small ribosomal subunit protein uS15.